Here is a 232-residue protein sequence, read N- to C-terminus: Ribonuclease 3 (232 aa).

Residues 10–135 (ALKIYEATGY…LIGAMYMDGG (126 aa)) form the RNase III domain. Glu-48 contributes to the Mg(2+) binding site. Residue Asp-52 is part of the active site. Residues Asn-121 and Glu-124 each contribute to the Mg(2+) site. Glu-124 is an active-site residue. Positions 161 to 230 (DPKTALQEWV…AKLMLKKITE (70 aa)) constitute a DRBM domain.

The protein belongs to the ribonuclease III family. As to quaternary structure, homodimer. It depends on Mg(2+) as a cofactor.

The protein localises to the cytoplasm. It catalyses the reaction Endonucleolytic cleavage to 5'-phosphomonoester.. Functionally, digests double-stranded RNA. Involved in the processing of primary rRNA transcript to yield the immediate precursors to the large and small rRNAs (23S and 16S). Processes some mRNAs, and tRNAs when they are encoded in the rRNA operon. Processes pre-crRNA and tracrRNA of type II CRISPR loci if present in the organism. In Anaplasma marginale (strain Florida), this protein is Ribonuclease 3.